We begin with the raw amino-acid sequence, 353 residues long: Photosystem II D2 protein (353 aa).

T2 carries the post-translational modification N-acetylthreonine. T2 carries the post-translational modification Phosphothreonine. Residues 41 to 61 (CAYFALGGWFTGTTFVTSWYT) form a helical membrane-spanning segment. A chlorophyll a-binding site is contributed by H118. A helical membrane pass occupies residues 125–141 (GFMLRQFELARSVQLRP). Positions 130 and 143 each coordinate pheophytin a. The helical transmembrane segment at 153 to 166 (VFVSVFLIYPLGQS) threads the bilayer. H198 lines the chlorophyll a pocket. The helical transmembrane segment at 208–228 (AALLCAIHGATVENTLFEDGD) threads the bilayer. A plastoquinone contacts are provided by H215 and F262. Residue H215 participates in Fe cation binding. H269 contacts Fe cation. Residues 279-295 (GLWMSAIGVVGLALNLR) traverse the membrane as a helical segment.

Belongs to the reaction center PufL/M/PsbA/D family. As to quaternary structure, PSII is composed of 1 copy each of membrane proteins PsbA, PsbB, PsbC, PsbD, PsbE, PsbF, PsbH, PsbI, PsbJ, PsbK, PsbL, PsbM, PsbT, PsbX, PsbY, PsbZ, Psb30/Ycf12, at least 3 peripheral proteins of the oxygen-evolving complex and a large number of cofactors. It forms dimeric complexes. The D1/D2 heterodimer binds P680, chlorophylls that are the primary electron donor of PSII, and subsequent electron acceptors. It shares a non-heme iron and each subunit binds pheophytin, quinone, additional chlorophylls, carotenoids and lipids. There is also a Cl(-1) ion associated with D1 and D2, which is required for oxygen evolution. The PSII complex binds additional chlorophylls, carotenoids and specific lipids. is required as a cofactor.

The protein localises to the plastid. It is found in the chloroplast thylakoid membrane. It catalyses the reaction 2 a plastoquinone + 4 hnu + 2 H2O = 2 a plastoquinol + O2. Photosystem II (PSII) is a light-driven water:plastoquinone oxidoreductase that uses light energy to abstract electrons from H(2)O, generating O(2) and a proton gradient subsequently used for ATP formation. It consists of a core antenna complex that captures photons, and an electron transfer chain that converts photonic excitation into a charge separation. The D1/D2 (PsbA/PsbD) reaction center heterodimer binds P680, the primary electron donor of PSII as well as several subsequent electron acceptors. D2 is needed for assembly of a stable PSII complex. The chain is Photosystem II D2 protein from Pinus thunbergii (Japanese black pine).